The chain runs to 154 residues: Ascorbate-specific PTS system EIIA component (154 aa).

A PTS EIIA type-2 domain is found at 6-150 (SLAENNSIRL…QEVLDLIDRT (145 aa)). His-68 functions as the Tele-phosphohistidine intermediate in the catalytic mechanism. A Phosphohistidine modification is found at His-68.

Its subcellular location is the cytoplasm. The phosphoenolpyruvate-dependent sugar phosphotransferase system (sugar PTS), a major carbohydrate active transport system, catalyzes the phosphorylation of incoming sugar substrates concomitantly with their translocation across the cell membrane. The enzyme II UlaABC PTS system is involved in ascorbate transport. This Salmonella choleraesuis (strain SC-B67) protein is Ascorbate-specific PTS system EIIA component (ulaC).